Here is a 542-residue protein sequence, read N- to C-terminus: Chaperonin GroEL (542 aa).

Residues Thr29–Pro32, Lys50, Asp86–Thr90, Gly415, and Asp495 each bind ATP.

The protein belongs to the chaperonin (HSP60) family. Forms a cylinder of 14 subunits composed of two heptameric rings stacked back-to-back. Interacts with the co-chaperonin GroES.

It localises to the cytoplasm. The catalysed reaction is ATP + H2O + a folded polypeptide = ADP + phosphate + an unfolded polypeptide.. Together with its co-chaperonin GroES, plays an essential role in assisting protein folding. The GroEL-GroES system forms a nano-cage that allows encapsulation of the non-native substrate proteins and provides a physical environment optimized to promote and accelerate protein folding. The polypeptide is Chaperonin GroEL (Flavobacterium psychrophilum (strain ATCC 49511 / DSM 21280 / CIP 103535 / JIP02/86)).